We begin with the raw amino-acid sequence, 191 residues long: Protein GrpE (191 aa).

Basic and acidic residues predominate over residues 1-21; it reads MSDKKKNAEEFEETFSDKTSE. The segment at 1-39 is disordered; sequence MSDKKKNAEEFEETFSDKTSEDESTVENETVEENENEDV. Over residues 22 to 38 the composition is skewed to acidic residues; that stretch reads DESTVENETVEENENED.

Belongs to the GrpE family. In terms of assembly, homodimer.

The protein resides in the cytoplasm. Functionally, participates actively in the response to hyperosmotic and heat shock by preventing the aggregation of stress-denatured proteins, in association with DnaK and GrpE. It is the nucleotide exchange factor for DnaK and may function as a thermosensor. Unfolded proteins bind initially to DnaJ; upon interaction with the DnaJ-bound protein, DnaK hydrolyzes its bound ATP, resulting in the formation of a stable complex. GrpE releases ADP from DnaK; ATP binding to DnaK triggers the release of the substrate protein, thus completing the reaction cycle. Several rounds of ATP-dependent interactions between DnaJ, DnaK and GrpE are required for fully efficient folding. The polypeptide is Protein GrpE (Tetragenococcus halophilus (Pediococcus halophilus)).